A 583-amino-acid chain; its full sequence is Putative fatty-acid--CoA ligase fadD25 (583 aa).

Transmembrane regions (helical) follow at residues 77–97 (YVVS…LSIP), 109–129 (VFAD…DNVV), and 229–249 (FVLG…TSPI). The disordered stretch occupies residues 353–375 (IVQFDPQKLPDGQAERTESDGGT).

It belongs to the ATP-dependent AMP-binding enzyme family.

The protein resides in the cell membrane. The sequence is that of Putative fatty-acid--CoA ligase fadD25 (fadD25) from Mycobacterium tuberculosis (strain CDC 1551 / Oshkosh).